Reading from the N-terminus, the 364-residue chain is tRNA/tmRNA (uracil-C(5))-methyltransferase (364 aa).

Residues glutamine 188, tyrosine 216, asparagine 221, glutamate 237, and aspartate 297 each coordinate S-adenosyl-L-methionine. Cysteine 322 (nucleophile) is an active-site residue. The active-site Proton acceptor is the glutamate 356.

This sequence belongs to the class I-like SAM-binding methyltransferase superfamily. RNA M5U methyltransferase family. TrmA subfamily.

The enzyme catalyses uridine(54) in tRNA + S-adenosyl-L-methionine = 5-methyluridine(54) in tRNA + S-adenosyl-L-homocysteine + H(+). The catalysed reaction is uridine(341) in tmRNA + S-adenosyl-L-methionine = 5-methyluridine(341) in tmRNA + S-adenosyl-L-homocysteine + H(+). Functionally, dual-specificity methyltransferase that catalyzes the formation of 5-methyluridine at position 54 (m5U54) in all tRNAs, and that of position 341 (m5U341) in tmRNA (transfer-mRNA). This Colwellia psychrerythraea (strain 34H / ATCC BAA-681) (Vibrio psychroerythus) protein is tRNA/tmRNA (uracil-C(5))-methyltransferase.